Here is a 116-residue protein sequence, read N- to C-terminus: Large ribosomal subunit protein bL19 (116 aa).

The protein belongs to the bacterial ribosomal protein bL19 family.

This protein is located at the 30S-50S ribosomal subunit interface and may play a role in the structure and function of the aminoacyl-tRNA binding site. The sequence is that of Large ribosomal subunit protein bL19 from Histophilus somni (strain 129Pt) (Haemophilus somnus).